Reading from the N-terminus, the 311-residue chain is Replicative helicase loader DnaI (311 aa).

Residues 1 to 136 are N-terminal domain (Nd); it reads MEPIGRSLQG…LGATFQQVDI (136 aa). Zn(2+) contacts are provided by Cys67, Cys70, His84, and Cys101. The tract at residues 137–311 is C-terminal domain (Cd); it reads SDPSRLAMFQ…RLDGENRRHP (175 aa). 168–175 serves as a coordination point for ATP; that stretch reads GKFGVGKT.

It belongs to the DnaI family. The DNA replisome assembles sequentially on oriC in this order; DnaA, DnaD, DnaB, DnaI-DnaC helicase. Monomer with a very minor amount of dimer in solution. Interacts with replicative helicase (from G.stearothermophilus, called DnaB); this interaction is disrupted by DnaD. Interacts with replicative helicase DnaC, forms a DnaC(6):DnaI(6) complex. Interacts with the helicase as 3 dimers. A stable complex with DnaG primase, DnaI(6):helicase(6):DnaG(3) fragment can be isolated; DnaI and DnaG do not contact each other (helicase and DnaG in this complex are derived from G.stearothermophilus). The cofactor is Zn(2+).

Its subcellular location is the cytoplasm. It catalyses the reaction ATP + H2O = ADP + phosphate + H(+). Helps load the DnaC replicative helicase onto single-stranded (ss)DNA and simulates the helicase activity; in the presence of DnaB more helicase activity is seen. Regulates DnaC helicase activity, at low concentrations stimulates the DNA helicase and ATPase activities of DnaC. Has no measurable ATPase activity after 1 hour incubation of 6 uM DnaI with or without DNA. Another group has found the protein has weak ATPase activity that is not stimulated by ssDNA. Whole protein binds forked DNA (but not ssDNA) weakly; ATP and ADPNP (probably 5'-adenylyl beta, gamma-imidodiphosphate) have no effect on DNA binding. DnaB, DnaD and DnaI may be required for a PriA-independent pathway of replication fork restart. This Bacillus subtilis (strain 168) protein is Replicative helicase loader DnaI.